Consider the following 162-residue polypeptide: SsrA-binding protein (162 aa).

The protein belongs to the SmpB family.

It localises to the cytoplasm. Its function is as follows. Required for rescue of stalled ribosomes mediated by trans-translation. Binds to transfer-messenger RNA (tmRNA), required for stable association of tmRNA with ribosomes. tmRNA and SmpB together mimic tRNA shape, replacing the anticodon stem-loop with SmpB. tmRNA is encoded by the ssrA gene; the 2 termini fold to resemble tRNA(Ala) and it encodes a 'tag peptide', a short internal open reading frame. During trans-translation Ala-aminoacylated tmRNA acts like a tRNA, entering the A-site of stalled ribosomes, displacing the stalled mRNA. The ribosome then switches to translate the ORF on the tmRNA; the nascent peptide is terminated with the 'tag peptide' encoded by the tmRNA and targeted for degradation. The ribosome is freed to recommence translation, which seems to be the essential function of trans-translation. This Shewanella frigidimarina (strain NCIMB 400) protein is SsrA-binding protein.